We begin with the raw amino-acid sequence, 130 residues long: Fluoride-specific ion channel FluC (130 aa).

The next 4 membrane-spanning stretches (helical) occupy residues 3–23, 38–58, 67–87, and 102–122; these read LVFL…YFVG, LGTF…GHLA, FGIF…SYGL, and ISYV…GWFL. Residues Gly-77 and Thr-80 each contribute to the Na(+) site.

It belongs to the fluoride channel Fluc/FEX (TC 1.A.43) family.

The protein localises to the cell inner membrane. It carries out the reaction fluoride(in) = fluoride(out). Its activity is regulated as follows. Na(+) is not transported, but it plays an essential structural role and its presence is essential for fluoride channel function. Functionally, fluoride-specific ion channel. Important for reducing fluoride concentration in the cell, thus reducing its toxicity. The polypeptide is Fluoride-specific ion channel FluC (Helicobacter pylori (strain J99 / ATCC 700824) (Campylobacter pylori J99)).